A 183-amino-acid polypeptide reads, in one-letter code: MNWQQAVETTVTGMGYELVECERSARGLLCVYIDRVPGSVYLTGPGEFVLVEDCELVTRQLRYLFEVENVDYSRLEVSSPGLDRPLRKVGDFLRFLGSDVDVTLKAPFQGRKNYRGLLRQAGDTPEQGFELVFQDGKEDKVLGFALDEVREARLVPVVDFKGRMRQTADAPQGAAQETGGHEE.

This sequence belongs to the RimP family.

It is found in the cytoplasm. In terms of biological role, required for maturation of 30S ribosomal subunits. The protein is Ribosome maturation factor RimP of Leptothrix cholodnii (strain ATCC 51168 / LMG 8142 / SP-6) (Leptothrix discophora (strain SP-6)).